The sequence spans 323 residues: tRNA N6-adenosine threonylcarbamoyltransferase (323 aa).

Positions 110 and 114 each coordinate Fe cation. Substrate contacts are provided by residues 131 to 135, Asp164, Gly177, and Asn264; that span reads VASGG. Residue Asp288 coordinates Fe cation.

This sequence belongs to the KAE1 / TsaD family. It depends on Fe(2+) as a cofactor.

The protein resides in the cytoplasm. The enzyme catalyses L-threonylcarbamoyladenylate + adenosine(37) in tRNA = N(6)-L-threonylcarbamoyladenosine(37) in tRNA + AMP + H(+). Required for the formation of a threonylcarbamoyl group on adenosine at position 37 (t(6)A37) in tRNAs that read codons beginning with adenine. Is involved in the transfer of the threonylcarbamoyl moiety of threonylcarbamoyl-AMP (TC-AMP) to the N6 group of A37, together with TsaE and TsaB. TsaD likely plays a direct catalytic role in this reaction. This is tRNA N6-adenosine threonylcarbamoyltransferase from Thermus thermophilus (strain ATCC BAA-163 / DSM 7039 / HB27).